We begin with the raw amino-acid sequence, 98 residues long: NADH-ubiquinone oxidoreductase chain 4L (98 aa).

Transmembrane regions (helical) follow at residues 1 to 21 (MEQI…GVLT), 28 to 48 (STLL…VLLI), and 61 to 81 (LILL…LVTI).

It belongs to the complex I subunit 4L family. In terms of assembly, core subunit of respiratory chain NADH dehydrogenase (Complex I) which is composed of 45 different subunits.

Its subcellular location is the mitochondrion inner membrane. The catalysed reaction is a ubiquinone + NADH + 5 H(+)(in) = a ubiquinol + NAD(+) + 4 H(+)(out). Core subunit of the mitochondrial membrane respiratory chain NADH dehydrogenase (Complex I) which catalyzes electron transfer from NADH through the respiratory chain, using ubiquinone as an electron acceptor. Part of the enzyme membrane arm which is embedded in the lipid bilayer and involved in proton translocation. The polypeptide is NADH-ubiquinone oxidoreductase chain 4L (MT-ND4L) (Monodelphis domestica (Gray short-tailed opossum)).